A 326-amino-acid chain; its full sequence is Zinc finger protein 830 (326 aa).

Basic residues predominate over residues 1-11; it reads MAASRKGKAVK. Positions 1–37 are disordered; that stretch reads MAASRKGKAVKAVKQEDLRRLMQETRRDSGRQKRVES. Residues 13-36 are compositionally biased toward basic and acidic residues; the sequence is VKQEDLRRLMQETRRDSGRQKRVE. The segment at 50–72 adopts a C2H2-type zinc-finger fold; it reads CALCDAPVKNALLWQTHVLGKQH. Residues 83–108 are compositionally biased toward low complexity; the sequence is TAPAHTPAPAHTPAHTPAAASSSSST. Disordered regions lie at residues 83–214, 237–257, and 276–309; these read TAPA…PVRD, EMRQ…EEGR, and EELR…EEEE. The segment covering 180–195 has biased composition (polar residues); that stretch reads HSGSVSKAEQQESQEP. The stretch at 224-295 forms a coiled coil; that stretch reads KDQLEREWEE…RSRRRSQRRE (72 aa). Residues 276 to 286 show a composition bias toward basic and acidic residues; the sequence is EELRAKQETAR. Over residues 298–309 the composition is skewed to acidic residues; the sequence is PMQEEEPLEEEE.

The protein resides in the nucleus. It localises to the chromosome. It is found in the nucleus speckle. Its function is as follows. May act as an important regulator of the cell cycle that participates in the maintenance of genome integrity. The protein is Zinc finger protein 830 of Danio rerio (Zebrafish).